A 189-amino-acid chain; its full sequence is MSKPTREEAKEAVRTLLKFIGEDPSREGLLKTPDRVINSYAEIFSGYGKDVAKILNTKFYETCNFQDFILLNIKFTSFCEHHILPFNGTVDIAYVPDNCIVGISKLARIVNIFARRLQIQEKMTVQIAESVQENLKPLGVAVKISAVHSCMSMRGVMQDNSVMNTMHYTGIFAEQQKYRHEFLNLTAKR.

Zn(2+) is bound by residues Cys-79, His-82, and Cys-150.

The protein belongs to the GTP cyclohydrolase I family. As to quaternary structure, toroid-shaped homodecamer, composed of two pentamers of five dimers.

The enzyme catalyses GTP + H2O = 7,8-dihydroneopterin 3'-triphosphate + formate + H(+). It participates in cofactor biosynthesis; 7,8-dihydroneopterin triphosphate biosynthesis; 7,8-dihydroneopterin triphosphate from GTP: step 1/1. This is GTP cyclohydrolase 1 from Rickettsia massiliae (strain Mtu5).